Consider the following 217-residue polypeptide: Probable transaldolase (217 aa).

The Schiff-base intermediate with substrate role is filled by Lys-83.

The protein belongs to the transaldolase family. Type 3B subfamily.

It localises to the cytoplasm. The enzyme catalyses D-sedoheptulose 7-phosphate + D-glyceraldehyde 3-phosphate = D-erythrose 4-phosphate + beta-D-fructose 6-phosphate. It functions in the pathway carbohydrate degradation; pentose phosphate pathway; D-glyceraldehyde 3-phosphate and beta-D-fructose 6-phosphate from D-ribose 5-phosphate and D-xylulose 5-phosphate (non-oxidative stage): step 2/3. In terms of biological role, transaldolase is important for the balance of metabolites in the pentose-phosphate pathway. The polypeptide is Probable transaldolase (Sinorhizobium medicae (strain WSM419) (Ensifer medicae)).